The primary structure comprises 846 residues: Selenocysteine insertion sequence-binding protein 2 (846 aa).

Basic and acidic residues-rich tracts occupy residues 151-165 (RRAW…RRAD) and 206-215 (PEFEFSRLDF). 5 disordered regions span residues 151 to 246 (RRAW…SNMS), 266 to 288 (TDHT…TREL), 321 to 440 (TTSS…VPVQ), 448 to 467 (AALE…RPVV), and 475 to 613 (VLSK…DSAT). S220 is subject to Phosphoserine. Polar residues-rich tracts occupy residues 220 to 232 (SPKN…TQKQ), 272 to 288 (AVTN…TREL), and 321 to 342 (TTSS…SDPS). The Nuclear localization signal motif lies at 370–380 (KKNKKKKEKSK). Positions 417–428 (KLQSKQQAQNDF) are enriched in polar residues. Residues 527 to 536 (ILKERQERMQ) are compositionally biased toward basic and acidic residues. The span at 542-551 (SAVSPTVASD) shows a compositional bias: polar residues. Positions 666–687 (LVLGLREVLKHLKLRKLKCIII) are RNA-binding. The interval 774 to 804 (RQEQAGEPGPQTPPSPPMQDPIQSTDEGTLA) is disordered. Residues 783–792 (PQTPPSPPMQ) show a composition bias toward pro residues.

As to expression, ubiquitous.

It localises to the cytoplasm. It is found in the nucleus. In terms of biological role, mRNA-binding protein that binds to the SECIS (selenocysteine insertion sequence) element present in the 3'-UTR of mRNAs encoding selenoproteins and facilitates the incorporation of the rare amino acid selenocysteine. Insertion of selenocysteine at UGA codons is mediated by SECISBP2 and EEFSEC: SECISBP2 (1) specifically binds the SECIS sequence once the 80S ribosome encounters an in-frame UGA codon and (2) contacts the RPS27A/eS31 of the 40S ribosome before ribosome stalling. (3) GTP-bound EEFSEC then delivers selenocysteinyl-tRNA(Sec) to the 80S ribosome and adopts a preaccommodated state conformation. (4) After GTP hydrolysis, EEFSEC dissociates from the assembly, selenocysteinyl-tRNA(Sec) accommodates, and peptide bond synthesis and selenoprotein elongation occur. In Rattus norvegicus (Rat), this protein is Selenocysteine insertion sequence-binding protein 2 (Secisbp2).